The chain runs to 201 residues: Large ribosomal subunit protein uL4 (201 aa).

The tract at residues 42–67 (GNSAQKTRSEVSGGGKKPWNQKGTGR) is disordered.

It belongs to the universal ribosomal protein uL4 family. As to quaternary structure, part of the 50S ribosomal subunit.

One of the primary rRNA binding proteins, this protein initially binds near the 5'-end of the 23S rRNA. It is important during the early stages of 50S assembly. It makes multiple contacts with different domains of the 23S rRNA in the assembled 50S subunit and ribosome. Functionally, forms part of the polypeptide exit tunnel. The protein is Large ribosomal subunit protein uL4 of Legionella pneumophila (strain Lens).